Consider the following 313-residue polypeptide: MLNLIYNEWLKIFSRAGTWVMIGILGLTMVGFAFLANHFSAGESNSHWKQELQAQNAELKKEIKEDPSLKDGYKETITLNDYRIEHNIPSDTGYTVWSYVTDSANFTILTGLFTIIIAAGIVANEFNWGTIKLLMIRPLSRFQILMSKYITVLLFGLLLLLILFIGSTLLGLIFFGTGGETAANIHLIYKDGHVIEQNMMGHLATTYLSESVSALMVATMAFMLSAVFRNSSLAVGFSIFLLVAGTTATAFIAAKFDWAKYILFANVDLTQYVDGTPLIKGMTMTFSLVMLAIYFIIFLLLAFGIFMKRDIAN.

Helical transmembrane passes span 16–36 (AGTW…AFLA), 106–126 (FTIL…ANEF), 155–175 (FGLL…LIFF), 208–228 (LSES…SAVF), 233–253 (LAVG…AFIA), and 286–306 (FSLV…FGIF).

The protein resides in the cell membrane. This is an uncharacterized protein from Bacillus subtilis (strain 168).